We begin with the raw amino-acid sequence, 842 residues long: Taste receptor type 1 member 1 (842 aa).

The N-terminal stretch at Met-1 to Cys-19 is a signal peptide. Over Trp-20–Ser-568 the chain is Extracellular. N-linked (GlcNAc...) asparagine glycans are attached at residues Asn-88, Asn-89, Asn-96, Asn-136, Asn-292, Asn-480, and Asn-530. A helical transmembrane segment spans residues Leu-569–Phe-589. Over Ala-590–Arg-604 the chain is Cytoplasmic. The chain crosses the membrane as a helical span at residues Leu-605 to Gly-625. Topologically, residues Lys-626 to Ser-640 are extracellular. Residues Leu-641–Phe-661 form a helical membrane-spanning segment. Topologically, residues Lys-662 to Gly-681 are cytoplasmic. The helical transmembrane segment at Ile-682–Trp-702 threads the bilayer. Over Thr-703–Asn-725 the chain is Extracellular. Residues Ser-726 to Cys-746 form a helical membrane-spanning segment. The Cytoplasmic portion of the chain corresponds to Ser-747–Cys-762. A helical transmembrane segment spans residues Val-763–Ile-783. Over Tyr-784–Leu-789 the chain is Extracellular. Residues Pro-790–Leu-810 form a helical membrane-spanning segment. Residues Pro-811–Thr-842 lie on the Cytoplasmic side of the membrane.

The protein belongs to the G-protein coupled receptor 3 family. TAS1R subfamily. In terms of assembly, forms heterodimers with TAS1R3. Expressed strongly only in fungiform papillae.

Its subcellular location is the cell membrane. In terms of biological role, putative taste receptor. TAS1R1/TAS1R3 responds to the umami taste stimulus (the taste of monosodium glutamate) and also to most of the 20 standard L-amino acids, but not to their D-enantiomers or other compounds. Sequence differences within and between species can significantly influence the selectivity and specificity of taste responses. This Mus musculus (Mouse) protein is Taste receptor type 1 member 1 (Tas1r1).